Here is a 220-residue protein sequence, read N- to C-terminus: A-type ATP synthase subunit K (220 aa).

6 consecutive transmembrane segments (helical) span residues Leu-5–Ile-25, Phe-63–Ala-83, Leu-90–Ala-110, Leu-125–Phe-145, Ala-155–Ile-175, and Leu-195–Ile-215.

It belongs to the V-ATPase proteolipid subunit family. In terms of assembly, the A-type ATPase is composed of subunits A(3), B(3), C, D, E(1 or 2), F, H(2), I and K(x). Subunit K dimerizes and may form higher oligomers.

The protein localises to the cell membrane. Component of the A-type ATP synthase that produces ATP from ADP in the presence of a proton gradient across the membrane. The chain is A-type ATP synthase subunit K from Methanocaldococcus jannaschii (strain ATCC 43067 / DSM 2661 / JAL-1 / JCM 10045 / NBRC 100440) (Methanococcus jannaschii).